The chain runs to 519 residues: uncharacterized protein (519 aa).

Residues 477–486 (IKRERAHVTQ) are compositionally biased toward basic residues. The segment at 477 to 519 (IKRERAHVTQRNKPPPSGGDTAVAEGFEPPDGVSRLSLSRRVH) is disordered.

This is an uncharacterized protein from Mycobacterium tuberculosis (strain ATCC 25618 / H37Rv).